The chain runs to 416 residues: MSLVAIGINHKTATVDLREKVAFSPDKIHDAMKSLASRTRSGEAVIVSTCNRTELYCNNGDEADIIEWLEEYHGLDHKDVAPCLYNYHGQTAVKHLMRVASGLDSLILGEPQILGQVKQAFAKAKEAGTVALTIDRLFQNTFSVAKKVRTETEIGAAAVSVAFAAVSMAKHIFSSLSTTKVLLIGAGETIELVAKHLKDNGVASMVVANRTLERAQGMCEEFGATAITLAQIPDYLPKADIVISSTASPLPILGKGMVEKALKQRRHQPMLLVDIAVPRDIEPEVADLDDAFLYTVDDLHSIIEQNMASRKEAAEQAELITEEQSYLFMDWVRSLESVDSIREYRNQSMAIKDELVERALNKLAQGGDTEQVLIELANRLTNKLIHAPTQALTAASRQGDLNTLGQLRTALGLDKN.

Residues threonine 49–arginine 52, serine 105, glutamate 110–glutamine 112, and glutamine 116 contribute to the substrate site. Catalysis depends on cysteine 50, which acts as the Nucleophile. Position 185–190 (glycine 185–isoleucine 190) interacts with NADP(+).

It belongs to the glutamyl-tRNA reductase family. Homodimer.

It carries out the reaction (S)-4-amino-5-oxopentanoate + tRNA(Glu) + NADP(+) = L-glutamyl-tRNA(Glu) + NADPH + H(+). The protein operates within porphyrin-containing compound metabolism; protoporphyrin-IX biosynthesis; 5-aminolevulinate from L-glutamyl-tRNA(Glu): step 1/2. Functionally, catalyzes the NADPH-dependent reduction of glutamyl-tRNA(Glu) to glutamate 1-semialdehyde (GSA). The chain is Glutamyl-tRNA reductase from Shewanella putrefaciens (strain CN-32 / ATCC BAA-453).